Reading from the N-terminus, the 435-residue chain is MSSDPPAKTQHCSFCGIEQGRDTPLIAGIEGQICEACVRLAEQVVANWGRKRSMAELHGNVPKPEDIKRHLDQYVIGQELAKEILSVAVYNHYKRLRHESREILGLAGSDTEVQVGKSNILMIGPTGTGKTLLASTLARIVGVPFVVADATTLTQAGYVGDDVENILVRLLEAADGSVERAEWGIVYIDEVDKLAKSPEMAINTRDISGEGVQQALLRFVEGSQVKVAARGRRREGSGGGEEVTIDTRNILFIAGGAFPGLERHVEKRIGPPRGEIGFHAPVQDAKRPLLEELLAEIQPEDLRRFGLIPEFIGRFPVIAPLEPLDEAAFVRILTEPRDALVRQYQKLFAYEGVELVFTEPAIRRIAARTIERDTGARGLRSIIEHILRRPMFEIPSQSDVRQCVVDADTVDGKAPVTLVRAEEEAGGARLAAGEV.

Residues 1-53 (MSSDPPAKTQHCSFCGIEQGRDTPLIAGIEGQICEACVRLAEQVVANWGRKRS) enclose the ClpX-type ZB domain. Positions 12, 15, 34, and 37 each coordinate Zn(2+). 125–132 (PTGTGKTL) contributes to the ATP binding site.

It belongs to the ClpX chaperone family. As to quaternary structure, component of the ClpX-ClpP complex. Forms a hexameric ring that, in the presence of ATP, binds to fourteen ClpP subunits assembled into a disk-like structure with a central cavity, resembling the structure of eukaryotic proteasomes.

Its function is as follows. ATP-dependent specificity component of the Clp protease. It directs the protease to specific substrates. Can perform chaperone functions in the absence of ClpP. The polypeptide is ATP-dependent Clp protease ATP-binding subunit ClpX 3 (Methylococcus capsulatus (strain ATCC 33009 / NCIMB 11132 / Bath)).